Here is a 308-residue protein sequence, read N- to C-terminus: HTH-type transcriptional activator AllS (308 aa).

The HTH lysR-type domain maps to 2–59 (FDPETLRTFIAVAETGSFSKAAERLCKTTATISYRIKLLEENTGVALFFRTTRSVTLT). Positions 19-38 (FSKAAERLCKTTATISYRIK) form a DNA-binding region, H-T-H motif.

Belongs to the LysR transcriptional regulatory family.

Its function is as follows. Positive regulator essential for the expression of AllD operon. Binds to the AllD promoter. This chain is HTH-type transcriptional activator AllS (allS), found in Escherichia coli O157:H7.